The sequence spans 545 residues: Chaperonin GroEL (545 aa).

Residues 30-33 (TLGP), K51, 87-91 (DGTTT), G415, 479-481 (NAA), and D495 each bind ATP. Residues 526-545 (KEDKPDLGGAGGMGGMGGMM) are disordered. The span at 533 to 545 (GGAGGMGGMGGMM) shows a compositional bias: gly residues.

The protein belongs to the chaperonin (HSP60) family. As to quaternary structure, forms a cylinder of 14 subunits composed of two heptameric rings stacked back-to-back. Interacts with the co-chaperonin GroES.

The protein resides in the cytoplasm. It catalyses the reaction ATP + H2O + a folded polypeptide = ADP + phosphate + an unfolded polypeptide.. Together with its co-chaperonin GroES, plays an essential role in assisting protein folding. The GroEL-GroES system forms a nano-cage that allows encapsulation of the non-native substrate proteins and provides a physical environment optimized to promote and accelerate protein folding. In Sodalis glossinidius, this protein is Chaperonin GroEL.